Reading from the N-terminus, the 251-residue chain is Small ribosomal subunit protein uS2 (251 aa).

Belongs to the universal ribosomal protein uS2 family.

The polypeptide is Small ribosomal subunit protein uS2 (rpsB) (Arthrospira platensis (Spirulina platensis)).